Reading from the N-terminus, the 562-residue chain is NAD-dependent malic enzyme (562 aa).

Catalysis depends on Tyr-101, which acts as the Proton donor. Position 154 (Arg-154) interacts with NAD(+). Lys-172 (proton acceptor) is an active-site residue. Residues Glu-243, Asp-244, and Asp-267 each coordinate a divalent metal cation. Positions 267 and 415 each coordinate NAD(+).

It belongs to the malic enzymes family. In terms of assembly, homotetramer. Requires Mg(2+) as cofactor. The cofactor is Mn(2+).

The catalysed reaction is (S)-malate + NAD(+) = pyruvate + CO2 + NADH. It carries out the reaction oxaloacetate + H(+) = pyruvate + CO2. The protein is NAD-dependent malic enzyme of Shewanella sediminis (strain HAW-EB3).